Consider the following 570-residue polypeptide: 4-coumarate--CoA ligase 4 (570 aa).

Positions 218, 219, 220, 221, 222, and 226 each coordinate ATP. Tyrosine 268 contributes to the (E)-4-coumaroyl-AMP binding site. Arginine 289 lines the CoA pocket. The tract at residues 291–360 (ELNLVMELIQ…LKFPNAIFGQ (70 aa)) is SBD1. (E)-4-coumaroyl-AMP-binding residues include alanine 338, glutamine 360, glycine 361, and threonine 365. ATP contacts are provided by glutamine 360, glycine 361, threonine 365, aspartate 448, and arginine 463. Residues 361–427 (GYGMTESGTV…VRGHQLMKGY (67 aa)) form an SBD2 region. (E)-4-coumaroyl-AMP contacts are provided by lysine 465 and lysine 469. Residues lysine 471 and glycine 472 each coordinate CoA. ATP is bound at residue lysine 554.

Belongs to the ATP-dependent AMP-binding enzyme family. The cofactor is Mg(2+).

The enzyme catalyses (E)-sinapate + ATP + CoA = (E)-sinapoyl-CoA + AMP + diphosphate. It catalyses the reaction (E)-4-coumarate + ATP + CoA = (E)-4-coumaroyl-CoA + AMP + diphosphate. The catalysed reaction is (E)-caffeate + ATP + CoA = (E)-caffeoyl-CoA + AMP + diphosphate. It carries out the reaction (E)-ferulate + ATP + CoA = (E)-feruloyl-CoA + AMP + diphosphate. The enzyme catalyses (E)-sinapate + ATP + H(+) = (E)-sinapoyl-AMP + diphosphate. It catalyses the reaction (E)-sinapoyl-AMP + CoA = (E)-sinapoyl-CoA + AMP + H(+). The catalysed reaction is (E)-4-coumarate + ATP + H(+) = (E)-4-coumaroyl-AMP + diphosphate. It carries out the reaction (E)-4-coumaroyl-AMP + CoA = (E)-4-coumaroyl-CoA + AMP + H(+). The enzyme catalyses (E)-caffeate + ATP + H(+) = (E)-caffeoyl-AMP + diphosphate. It catalyses the reaction (E)-caffeoyl-AMP + CoA = (E)-caffeoyl-CoA + AMP + H(+). The catalysed reaction is (E)-ferulate + ATP + H(+) = (E)-feruloyl-AMP + diphosphate. It carries out the reaction (E)-feruloyl-AMP + CoA = (E)-feruloyl-CoA + AMP + H(+). It functions in the pathway phytoalexin biosynthesis; 3,4',5-trihydroxystilbene biosynthesis; 3,4',5-trihydroxystilbene from trans-4-coumarate: step 1/2. In terms of biological role, produces CoA thioesters of a variety of hydroxy- and methoxy-substituted cinnamic acids, which are used to synthesize several phenylpropanoid-derived compounds, including anthocyanins, flavonoids, isoflavonoids, coumarins, lignin, suberin and wall-bound phenolics. Follows a two-step reaction mechanism, wherein the carboxylate substrate first undergoes adenylation by ATP, followed by a thioesterification in the presence of CoA to yield the final CoA thioesters. The sequence is that of 4-coumarate--CoA ligase 4 from Arabidopsis thaliana (Mouse-ear cress).